The following is a 261-amino-acid chain: Thiazole synthase (261 aa).

Catalysis depends on lysine 95, which acts as the Schiff-base intermediate with DXP. Residues glycine 156, 182 to 183 (AG), and 204 to 205 (NT) each bind 1-deoxy-D-xylulose 5-phosphate.

This sequence belongs to the ThiG family. Homotetramer. Forms heterodimers with either ThiH or ThiS.

The protein localises to the cytoplasm. It catalyses the reaction [ThiS sulfur-carrier protein]-C-terminal-Gly-aminoethanethioate + 2-iminoacetate + 1-deoxy-D-xylulose 5-phosphate = [ThiS sulfur-carrier protein]-C-terminal Gly-Gly + 2-[(2R,5Z)-2-carboxy-4-methylthiazol-5(2H)-ylidene]ethyl phosphate + 2 H2O + H(+). It functions in the pathway cofactor biosynthesis; thiamine diphosphate biosynthesis. Catalyzes the rearrangement of 1-deoxy-D-xylulose 5-phosphate (DXP) to produce the thiazole phosphate moiety of thiamine. Sulfur is provided by the thiocarboxylate moiety of the carrier protein ThiS. In vitro, sulfur can be provided by H(2)S. In Pectobacterium atrosepticum (strain SCRI 1043 / ATCC BAA-672) (Erwinia carotovora subsp. atroseptica), this protein is Thiazole synthase.